Reading from the N-terminus, the 461-residue chain is Photosynthetic NDH subunit of subcomplex B 1, chloroplastic (461 aa).

A chloroplast-targeting transit peptide spans 1–44 (MASSLPLLPKPISPFFKTPPFSTSKPLVFLNFQTRLTSRSSDVS). The interval 66 to 90 (NEYGSLFADGKQDEDPRPPDNPDNP) is disordered. Positions 75–85 (GKQDEDPRPPD) are enriched in basic and acidic residues.

Part of the chloroplast NDH complex, composed of a mixture of chloroplast and nucleus encoded subunits. Component of the NDH subcomplex B, at least composed of PnsB1, PnsB2, PnsB3, PnsB4 and PnsB5.

It localises to the plastid. Its subcellular location is the chloroplast thylakoid membrane. Functionally, NDH shuttles electrons from NAD(P)H:plastoquinone, via FMN and iron-sulfur (Fe-S) centers, to quinones in the photosynthetic chain and possibly in a chloroplast respiratory chain. The immediate electron acceptor for the enzyme in this species is believed to be plastoquinone. Couples the redox reaction to proton translocation, and thus conserves the redox energy in a proton gradient. In Arabidopsis thaliana (Mouse-ear cress), this protein is Photosynthetic NDH subunit of subcomplex B 1, chloroplastic.